The sequence spans 332 residues: 2,3-diketo-L-gulonate reductase (332 aa).

H44 functions as the Proton donor in the catalytic mechanism. NAD(+)-binding positions include 168-174, 224-225, and 304-306; these read ITMVDMS, WK, and GHE.

The protein belongs to the LDH2/MDH2 oxidoreductase family. DlgD subfamily. As to quaternary structure, homodimer.

It is found in the cytoplasm. The catalysed reaction is 3-dehydro-L-gulonate + NAD(+) = 2,3-dioxo-L-gulonate + NADH + H(+). It catalyses the reaction 3-dehydro-L-gulonate + NADP(+) = 2,3-dioxo-L-gulonate + NADPH + H(+). Its function is as follows. Catalyzes the reduction of 2,3-diketo-L-gulonate in the presence of NADH, to form 3-keto-L-gulonate. This chain is 2,3-diketo-L-gulonate reductase, found in Escherichia coli (strain SMS-3-5 / SECEC).